Reading from the N-terminus, the 337-residue chain is Homeobox protein knotted-1-like 4 (337 aa).

Disordered regions lie at residues 1–56 (MEQQ…SFHE) and 159–190 (FTLDDNGSEGGNSSEDEQEAGGGDMASAGLPE). Over residues 27-38 (PTSTSTSPAVPS) the composition is skewed to low complexity. In terms of domain architecture, ELK spans 200 to 220 (ELKSHLLNKYSGYLSSLWREL). Positions 221 to 284 (SKKKKKGKLP…NQRKRHWKPT (64 aa)) form a DNA-binding region, homeobox; TALE-type.

Belongs to the TALE/KNOX homeobox family.

It is found in the nucleus. The protein is Homeobox protein knotted-1-like 4 (OSH10) of Oryza sativa subsp. japonica (Rice).